We begin with the raw amino-acid sequence, 240 residues long: Lipoprotein-releasing system ATP-binding protein LolD (240 aa).

The region spanning 15–240 is the ABC transporter domain; the sequence is IRAERLGKTY…GLRELTSAEV (226 aa). 51-58 contacts ATP; that stretch reads GASGAGKS.

Belongs to the ABC transporter superfamily. Lipoprotein translocase (TC 3.A.1.125) family. In terms of assembly, the complex is composed of two ATP-binding proteins (LolD) and two transmembrane proteins (LolC and LolE).

The protein localises to the cell inner membrane. Functionally, part of the ABC transporter complex LolCDE involved in the translocation of mature outer membrane-directed lipoproteins, from the inner membrane to the periplasmic chaperone, LolA. Responsible for the formation of the LolA-lipoprotein complex in an ATP-dependent manner. In Xylella fastidiosa (strain 9a5c), this protein is Lipoprotein-releasing system ATP-binding protein LolD.